Here is a 343-residue protein sequence, read N- to C-terminus: Biotin synthase (343 aa).

Residues 36-254 enclose the Radical SAM core domain; it reads NTIQISTLLS…IAVARIMMPK (219 aa). Cysteine 51, cysteine 55, and cysteine 58 together coordinate [4Fe-4S] cluster. Positions 95, 126, 186, and 258 each coordinate [2Fe-2S] cluster.

It belongs to the radical SAM superfamily. Biotin synthase family. Homodimer. The cofactor is [4Fe-4S] cluster. [2Fe-2S] cluster is required as a cofactor.

The catalysed reaction is (4R,5S)-dethiobiotin + (sulfur carrier)-SH + 2 reduced [2Fe-2S]-[ferredoxin] + 2 S-adenosyl-L-methionine = (sulfur carrier)-H + biotin + 2 5'-deoxyadenosine + 2 L-methionine + 2 oxidized [2Fe-2S]-[ferredoxin]. It functions in the pathway cofactor biosynthesis; biotin biosynthesis; biotin from 7,8-diaminononanoate: step 2/2. Catalyzes the conversion of dethiobiotin (DTB) to biotin by the insertion of a sulfur atom into dethiobiotin via a radical-based mechanism. The sequence is that of Biotin synthase from Buchnera aphidicola subsp. Acyrthosiphon pisum (strain 5A).